Reading from the N-terminus, the 258-residue chain is Thiamine thiazole synthase (258 aa).

Residues S36, 55–56 (ER), G63, V127, and 153–155 (HVD) each bind NAD(+). Fe cation is bound by residues D155 and H170. M224 contacts NAD(+). Residue R234 coordinates glycine.

This sequence belongs to the THI4 family. Homooctamer; tetramer of dimers. Fe(2+) serves as cofactor.

It catalyses the reaction hydrogen sulfide + glycine + NAD(+) = ADP-5-ethyl-4-methylthiazole-2-carboxylate + nicotinamide + 3 H2O + H(+). The protein operates within cofactor biosynthesis; thiamine diphosphate biosynthesis. Functionally, involved in the biosynthesis of the thiazole moiety of thiamine. Catalyzes the conversion of NAD and glycine to adenosine diphosphate 5-(2-hydroxyethyl)-4-methylthiazole-2-carboxylate (ADT), an adenylated thiazole intermediate, using free sulfide as a source of sulfur. This is Thiamine thiazole synthase from Desulfosudis oleivorans (strain DSM 6200 / JCM 39069 / Hxd3) (Desulfococcus oleovorans).